The following is a 206-amino-acid chain: Holliday junction branch migration complex subunit RuvA (206 aa).

The tract at residues 1 to 67 (MIASIFGKIT…QILEEGFAFN (67 aa)) is domain I. The tract at residues 68-141 (TLEEKEWFSK…YDRDDGGKRI (74 aa)) is domain II. The interval 141–145 (IKPNT) is flexible linker. The segment at 146 to 206 (AMANDYDEMF…QNNEVTNKTA (61 aa)) is domain III.

This sequence belongs to the RuvA family. Homotetramer. Forms an RuvA(8)-RuvB(12)-Holliday junction (HJ) complex. HJ DNA is sandwiched between 2 RuvA tetramers; dsDNA enters through RuvA and exits via RuvB. An RuvB hexamer assembles on each DNA strand where it exits the tetramer. Each RuvB hexamer is contacted by two RuvA subunits (via domain III) on 2 adjacent RuvB subunits; this complex drives branch migration. In the full resolvosome a probable DNA-RuvA(4)-RuvB(12)-RuvC(2) complex forms which resolves the HJ.

The protein localises to the cytoplasm. Functionally, the RuvA-RuvB-RuvC complex processes Holliday junction (HJ) DNA during genetic recombination and DNA repair, while the RuvA-RuvB complex plays an important role in the rescue of blocked DNA replication forks via replication fork reversal (RFR). RuvA specifically binds to HJ cruciform DNA, conferring on it an open structure. The RuvB hexamer acts as an ATP-dependent pump, pulling dsDNA into and through the RuvAB complex. HJ branch migration allows RuvC to scan DNA until it finds its consensus sequence, where it cleaves and resolves the cruciform DNA. The chain is Holliday junction branch migration complex subunit RuvA from Mycoplasma pneumoniae (strain ATCC 29342 / M129 / Subtype 1) (Mycoplasmoides pneumoniae).